The sequence spans 154 residues: Interleukin-2 (154 aa).

The signal sequence occupies residues 1–20; it reads MYRMQLLSCIALSLALVTNS. Thr23 carries an O-linked (GalNAc...) threonine glycan. Residues Cys78 and Cys126 are joined by a disulfide bond.

This sequence belongs to the IL-2 family.

It localises to the secreted. Its function is as follows. Cytokine produced by activated CD4-positive helper T-cells and to a lesser extend activated CD8-positive T-cells and natural killer (NK) cells that plays pivotal roles in the immune response and tolerance. Binds to a receptor complex composed of either the high-affinity trimeric IL-2R (IL2RA/CD25, IL2RB/CD122 and IL2RG/CD132) or the low-affinity dimeric IL-2R (IL2RB and IL2RG). Interaction with the receptor leads to oligomerization and conformation changes in the IL-2R subunits resulting in downstream signaling starting with phosphorylation of JAK1 and JAK3. In turn, JAK1 and JAK3 phosphorylate the receptor to form a docking site leading to the phosphorylation of several substrates including STAT5. This process leads to activation of several pathways including STAT, phosphoinositide-3-kinase/PI3K and mitogen-activated protein kinase/MAPK pathways. Functions as a T-cell growth factor and can increase NK-cell cytolytic activity as well. Promotes strong proliferation of activated B-cells and subsequently immunoglobulin production. Plays a pivotal role in regulating the adaptive immune system by controlling the survival and proliferation of regulatory T-cells, which are required for the maintenance of immune tolerance. Moreover, participates in the differentiation and homeostasis of effector T-cell subsets, including Th1, Th2, Th17 as well as memory CD8-positive T-cells. In Cercocebus atys (Sooty mangabey), this protein is Interleukin-2 (IL2).